We begin with the raw amino-acid sequence, 199 residues long: NAD(P)H dehydrogenase (quinone) (199 aa).

The region spanning 4-190 (VLVLYYSSYG…AMARFQGGHV (187 aa)) is the Flavodoxin-like domain. FMN contacts are provided by residues 10–15 (SSYGHI) and 78–80 (TRF). Tyr12 lines the NAD(+) pocket. Trp98 contributes to the substrate binding site. FMN-binding positions include 113–119 (STATQHG) and His134.

The protein belongs to the WrbA family. Requires FMN as cofactor.

The enzyme catalyses a quinone + NADH + H(+) = a quinol + NAD(+). It catalyses the reaction a quinone + NADPH + H(+) = a quinol + NADP(+). In Azoarcus sp. (strain BH72), this protein is NAD(P)H dehydrogenase (quinone).